The chain runs to 258 residues: Snake venom serine protease KN13 (258 aa).

Residues 1–18 (MVLIRVLANLLILQLSYA) form the signal peptide. The propeptide occupies 19–24 (QRSSEL). The 225-residue stretch at 25-249 (VIGGDECNIN…HLDWIQNIIA (225 aa)) folds into the Peptidase S1 domain. Disulfide bonds link cysteine 31–cysteine 163, cysteine 50–cysteine 66, cysteine 98–cysteine 256, cysteine 142–cysteine 210, cysteine 174–cysteine 189, and cysteine 200–cysteine 225. The Charge relay system role is filled by histidine 65. Asparagine 103 carries N-linked (GlcNAc...) asparagine glycosylation. The active-site Charge relay system is aspartate 110. Residues asparagine 121, asparagine 122, asparagine 154, and asparagine 170 are each glycosylated (N-linked (GlcNAc...) asparagine). Serine 204 acts as the Charge relay system in catalysis. An N-linked (GlcNAc...) asparagine glycan is attached at asparagine 251.

The protein belongs to the peptidase S1 family. Snake venom subfamily. In terms of assembly, monomer. In terms of tissue distribution, expressed by the venom gland.

It localises to the secreted. In terms of biological role, snake venom serine protease that may act in the hemostasis system of the prey. The polypeptide is Snake venom serine protease KN13 (Trimeresurus stejnegeri (Chinese green tree viper)).